A 173-amino-acid polypeptide reads, in one-letter code: UPF0316 protein Amet_0954 (173 aa).

The next 3 membrane-spanning stretches (helical) occupy residues 3-23 (LVLG…MGTV), 38-58 (AIGF…LEAL), and 61-81 (PVNI…GIYI).

The protein belongs to the UPF0316 family.

It is found in the cell membrane. This Alkaliphilus metalliredigens (strain QYMF) protein is UPF0316 protein Amet_0954.